Consider the following 446-residue polypeptide: Nuclear distribution protein PAC1-1 (446 aa).

Residues 9–41 (QAEELHKSLIAYLSSINASQSVTTLREELQIGD) form the LisH domain. The stretch at 60-86 (ISVVRLQKRILDLESKIASLQAELDSA) forms a coiled coil. WD repeat units follow at residues 112–153 (SHRG…RTLK), 155–195 (HTRT…ANIR), 199–239 (GHDH…CVKT), 242–281 (TQGDWVRDVFPSFDGKWLVSGGRDQAATIWEVSSGEARAS), 284–344 (GHEN…IKTL), 346–385 (GHNNWVRGLVFHPGGKYLFSVGDDKTIRCWDLSQEGKLVK), 390–430 (AHEH…TGFR), and 432–446 (VIATGSADSCVRVFM).

Belongs to the WD repeat LIS1/nudF family. As to quaternary structure, self-associates. Interacts with NDL1 and dynein.

It is found in the cytoplasm. Its subcellular location is the cytoskeleton. The protein localises to the spindle pole. In terms of biological role, positively regulates the activity of the minus-end directed microtubule motor protein dynein. May enhance dynein-mediated microtubule sliding by targeting dynein to the microtubule plus end. Required for nuclear migration during vegetative growth as well as development. Required for retrograde early endosome (EE) transport from the hyphal tip. Required for localization of dynein to the mitotic spindle poles. Recruits additional proteins to the dynein complex at SPBs. This is Nuclear distribution protein PAC1-1 from Uncinocarpus reesii (strain UAMH 1704).